The chain runs to 394 residues: Exodeoxyribonuclease 7 large subunit (394 aa).

This sequence belongs to the XseA family. Heterooligomer composed of large and small subunits.

Its subcellular location is the cytoplasm. The catalysed reaction is Exonucleolytic cleavage in either 5'- to 3'- or 3'- to 5'-direction to yield nucleoside 5'-phosphates.. In terms of biological role, bidirectionally degrades single-stranded DNA into large acid-insoluble oligonucleotides, which are then degraded further into small acid-soluble oligonucleotides. This chain is Exodeoxyribonuclease 7 large subunit, found in Thermotoga maritima (strain ATCC 43589 / DSM 3109 / JCM 10099 / NBRC 100826 / MSB8).